The following is a 303-amino-acid chain: MSSTLSENQAPETGTARVKRGMAEQLKGGVIMDVVTPEQAKIAEDAGAVAVMALERVPADIRKDGGVARMSDPDMIEGIIGAVSIPVMAKSRIGHFVEAQVLQSLGVDYIDESEVLTPADEVNHSDKFAFTTPFVCGATNLGEALRRIAEGAAMIRSKGEAGTGNVVEAVRHLRQIKNEIARLRGYDNNELYAAAKELRAPYELVKEVSELGRLPVVLFSAGGVATPADAALMRQLGAEGVFVGSGIFKSGDPAKRAAAIVKATTFYDDPKIIADASRNLGEAMVGINCDTLPETERYANRGW.

Aspartate 33 is a D-ribose 5-phosphate binding site. Lysine 90 (schiff-base intermediate with D-ribose 5-phosphate) is an active-site residue. Position 162 (glycine 162) interacts with D-ribose 5-phosphate. Arginine 174 serves as a coordination point for D-glyceraldehyde 3-phosphate. D-ribose 5-phosphate-binding positions include glycine 223 and 244-245 (GS).

This sequence belongs to the PdxS/SNZ family. In the presence of PdxT, forms a dodecamer of heterodimers.

The catalysed reaction is aldehydo-D-ribose 5-phosphate + D-glyceraldehyde 3-phosphate + L-glutamine = pyridoxal 5'-phosphate + L-glutamate + phosphate + 3 H2O + H(+). It participates in cofactor biosynthesis; pyridoxal 5'-phosphate biosynthesis. In terms of biological role, catalyzes the formation of pyridoxal 5'-phosphate from ribose 5-phosphate (RBP), glyceraldehyde 3-phosphate (G3P) and ammonia. The ammonia is provided by the PdxT subunit. Can also use ribulose 5-phosphate and dihydroxyacetone phosphate as substrates, resulting from enzyme-catalyzed isomerization of RBP and G3P, respectively. In Streptomyces coelicolor (strain ATCC BAA-471 / A3(2) / M145), this protein is Pyridoxal 5'-phosphate synthase subunit PdxS.